We begin with the raw amino-acid sequence, 132 residues long: MKAKQSKTPRALATGTKLTCADNTGARIVQIVSVFGYHGVRRRQPKMGLGDIATVTVKKGTPDMRKKLVRAVVIRQKKEMRRPNGLRVSFDDNAVVVVDEKNEPKGTEIKGPVAREVAERYPKLGSMATIIV.

The protein belongs to the universal ribosomal protein uL14 family. As to quaternary structure, part of the 50S ribosomal subunit. Forms a cluster with proteins L3 and L24e, part of which may contact the 16S rRNA in 2 intersubunit bridges.

Functionally, binds to 23S rRNA. Forms part of two intersubunit bridges in the 70S ribosome. This chain is Large ribosomal subunit protein uL14, found in Methanoregula boonei (strain DSM 21154 / JCM 14090 / 6A8).